The following is a 406-amino-acid chain: Arginine biosynthesis bifunctional protein ArgJ (406 aa).

Positions 152, 179, 190, 277, 401, and 406 each coordinate substrate. Thr190 acts as the Nucleophile in catalysis.

Belongs to the ArgJ family. Heterotetramer of two alpha and two beta chains.

Its subcellular location is the cytoplasm. It carries out the reaction N(2)-acetyl-L-ornithine + L-glutamate = N-acetyl-L-glutamate + L-ornithine. It catalyses the reaction L-glutamate + acetyl-CoA = N-acetyl-L-glutamate + CoA + H(+). It functions in the pathway amino-acid biosynthesis; L-arginine biosynthesis; L-ornithine and N-acetyl-L-glutamate from L-glutamate and N(2)-acetyl-L-ornithine (cyclic): step 1/1. It participates in amino-acid biosynthesis; L-arginine biosynthesis; N(2)-acetyl-L-ornithine from L-glutamate: step 1/4. In terms of biological role, catalyzes two activities which are involved in the cyclic version of arginine biosynthesis: the synthesis of N-acetylglutamate from glutamate and acetyl-CoA as the acetyl donor, and of ornithine by transacetylation between N(2)-acetylornithine and glutamate. The protein is Arginine biosynthesis bifunctional protein ArgJ of Neisseria gonorrhoeae.